Reading from the N-terminus, the 338-residue chain is Photosystem II assembly lipoprotein Ycf48 (338 aa).

Residues 1-23 (MKKIITSFPNLLLSILLCFVLSS) form the signal peptide. Residue Cys24 is the site of N-palmitoyl cysteine attachment. The S-diacylglycerol cysteine moiety is linked to residue Cys24.

This sequence belongs to the Ycf48 family. In terms of assembly, part of early PSII assembly complexes which includes D1 (psbA) and PsbI; not found in mature PSII. Binds to the lumenal side of PSII complexes. Interacts with YidC.

It localises to the cellular thylakoid membrane. Functionally, a factor required for optimal assembly of photosystem II (PSII), acting in the early stages of PSII assembly. Also plays a role in replacement of photodamaged D1 (psbA). Assists YidC in synthesis of chlorophyll-binding proteins. The polypeptide is Photosystem II assembly lipoprotein Ycf48 (Prochlorococcus marinus (strain MIT 9312)).